The sequence spans 312 residues: Protoheme IX farnesyltransferase (312 aa).

The next 8 membrane-spanning stretches (helical) occupy residues 34–54 (LVIF…HPVL), 56–76 (FTAI…NMAL), 119–139 (ALVN…YVVI), 152–172 (IVIG…AATG), 179–199 (LLLF…LALF), 225–245 (ILLY…LGYF), 247–267 (WVYG…AINV), and 283–303 (LFAF…LDVL).

Belongs to the UbiA prenyltransferase family. Protoheme IX farnesyltransferase subfamily.

It localises to the cell inner membrane. It carries out the reaction heme b + (2E,6E)-farnesyl diphosphate + H2O = Fe(II)-heme o + diphosphate. Its pathway is porphyrin-containing compound metabolism; heme O biosynthesis; heme O from protoheme: step 1/1. Its function is as follows. Converts heme B (protoheme IX) to heme O by substitution of the vinyl group on carbon 2 of heme B porphyrin ring with a hydroxyethyl farnesyl side group. The polypeptide is Protoheme IX farnesyltransferase (Nitrobacter hamburgensis (strain DSM 10229 / NCIMB 13809 / X14)).